Consider the following 358-residue polypeptide: Gibberellin 3-beta-dioxygenase 1 (358 aa).

Residues 204-308 (DLNWAQAALQ…RLSVAFLWGP (105 aa)) enclose the Fe2OG dioxygenase domain. Residues histidine 232, aspartate 234, and histidine 289 each coordinate Fe cation. Residue arginine 299 is part of the active site.

Belongs to the iron/ascorbate-dependent oxidoreductase family. GA3OX subfamily. L-ascorbate is required as a cofactor. It depends on Fe cation as a cofactor. As to expression, expressed in stems, roots, leaves, flowers, and siliques. Highly expressed near the nodes in stems and in the stamen filaments of flowers. Detected in developing cotyledons, vegetative shoot apical meristem and non-meristematic, non-elongation regions of the roots. Found in the cortex and the endodermis of the embryo axis in germinating seeds and in the placenta in developing siliques.

It carries out the reaction gibberellin A9 + 2-oxoglutarate + O2 = gibberellin A4 + succinate + CO2. The enzyme catalyses gibberellin A20 + 2-oxoglutarate + O2 = gibberellin A1 + succinate + CO2. It participates in plant hormone biosynthesis; gibberellin biosynthesis. Converts the inactive gibberellin (GA) precursors GA9 and GA20 into the bioactives gibberellins GA4 and GA1, respectively. Involved in the production of bioactive GA for vegetative growth and development. This Arabidopsis thaliana (Mouse-ear cress) protein is Gibberellin 3-beta-dioxygenase 1 (GA3OX1).